The following is a 461-amino-acid chain: Fibrinogen C domain-containing protein 1 (461 aa).

Residues 1-24 form a disordered region; sequence MVNDRWKTMGGAAQLEDRPRDKPQ. The Cytoplasmic portion of the chain corresponds to 1 to 33; that stretch reads MVNDRWKTMGGAAQLEDRPRDKPQRPSCGYVLC. Residues 15 to 24 are compositionally biased toward basic and acidic residues; it reads LEDRPRDKPQ. The chain crosses the membrane as a helical; Signal-anchor for type II membrane protein span at residues 34-54; that stretch reads TVLLALAVLLAVAVTGAVLFL. Topologically, residues 55-461 are extracellular; that stretch reads NHAHAPGTAP…MKIRPVREDR (407 aa). The segment at 214–238 is disordered; it reads GRPRNKADLQRAPARGTRPRGCATG. Residues 235–458 enclose the Fibrinogen C-terminal domain; sequence CATGSRPRDC…FSEMKIRPVR (224 aa). Cys244 and Cys273 form a disulfide bridge. Asn340 is a glycosylation site (N-linked (GlcNAc...) asparagine). Ca(2+)-binding residues include Asp393 and Asp395. A disulfide bridge connects residues Cys401 and Cys414.

Homotetramer; disulfide-linked. In terms of tissue distribution, expressed in the small and large intestinal epithelial cells with a highly polarized localization to the apical surface corresponding to the brush border and in the ducts of the salivary gland.

Its subcellular location is the membrane. Its function is as follows. Acetyl group-binding receptor which shows a high-affinity and calcium-dependent binding to acetylated structures such as chitin, some N-acetylated carbohydrates, and amino acids, but not to their non-acetylated counterparts. Can facilitate the endocytosis of acetylated components. This is Fibrinogen C domain-containing protein 1 (FIBCD1) from Homo sapiens (Human).